The sequence spans 269 residues: HTH-type transcriptional activator ArnR1 (269 aa).

Residues Met1 to Tyr217 are Cytoplasmic-facing. Residues Thr42–Asp65 constitute a DNA-binding region (H-T-H motif). The helical transmembrane segment at Glu218–Leu238 threads the bilayer. Topologically, residues Lys239–Gln241 are extracellular. The helical transmembrane segment at Leu242–Phe262 threads the bilayer. Topologically, residues Ala263–Ile269 are cytoplasmic.

The protein resides in the cell membrane. Its function is as follows. Involved in regulation of archaellar gene expression. May activate flaB transcription upon nutrient starvation by acting on the flaB promoter. The chain is HTH-type transcriptional activator ArnR1 from Sulfolobus acidocaldarius (strain ATCC 33909 / DSM 639 / JCM 8929 / NBRC 15157 / NCIMB 11770).